Reading from the N-terminus, the 390-residue chain is NADH-quinone oxidoreductase subunit D (390 aa).

Belongs to the complex I 49 kDa subunit family. In terms of assembly, NDH-1 is composed of 14 different subunits. Subunits NuoB, C, D, E, F, and G constitute the peripheral sector of the complex.

The protein resides in the cell membrane. It carries out the reaction a quinone + NADH + 5 H(+)(in) = a quinol + NAD(+) + 4 H(+)(out). Functionally, NDH-1 shuttles electrons from NADH, via FMN and iron-sulfur (Fe-S) centers, to quinones in the respiratory chain. The immediate electron acceptor for the enzyme in this species is believed to be ubiquinone. Couples the redox reaction to proton translocation (for every two electrons transferred, four hydrogen ions are translocated across the cytoplasmic membrane), and thus conserves the redox energy in a proton gradient. The chain is NADH-quinone oxidoreductase subunit D from Wolbachia sp. subsp. Brugia malayi (strain TRS).